A 594-amino-acid chain; its full sequence is Keratin, type II cytoskeletal 2 oral (594 aa).

A head region spans residues 1–164 (MSRQACKKSF…DPQIGQVKAQ (164 aa)). 2 positions are modified to omega-N-methylarginine: arginine 85 and arginine 104. Residues 165–200 (EREQIKTLNNKFASFIDKVRFLEQQNKVLETKWELL) form a coil 1A region. Residues 165–480 (EREQIKTLNN…KLLEGEECRL (316 aa)) enclose the IF rod domain. Positions 201-221 (QQQTIRSGSGPQNLEPFFESY) are linker 1. Positions 222 to 313 (ISCLRKQLDS…TLYDMELSQI (92 aa)) are coil 1B. The linker 12 stretch occupies residues 314-337 (QSHVSDTSVVLSMDNNRCLDLDSI). Positions 338-476 (IAEVKAQYED…ATYRKLLEGE (139 aa)) are coil 2. The segment at 477 to 594 (ECRLSGEFQN…TTSSSQQRSK (118 aa)) is tail. The segment at 497–594 (TSTSSSGSFR…TTSSSQQRSK (98 aa)) is disordered. A compositionally biased stretch (gly residues) spans 506–522 (RGTGGSNYGGDSSGRSG). Positions 523 to 551 (GSSSSSSRGSSSRGSSGSRLGSGGSISVS) are enriched in low complexity. Residue arginine 541 is modified to Omega-N-methylarginine. A compositionally biased stretch (polar residues) spans 552–564 (QQRMGFNSGGSQT). The span at 565-594 (SVGSSYKSGRGGSSSVQFSQTTSSSQQRSK) shows a compositional bias: low complexity.

This sequence belongs to the intermediate filament family. Heterotetramer of two type I and two type II keratins.

In terms of biological role, probably contributes to terminal cornification. The protein is Keratin, type II cytoskeletal 2 oral of Mus musculus (Mouse).